The sequence spans 391 residues: S-adenosylmethionine synthase (391 aa).

The tract at residues 1-20 is disordered; the sequence is MPRSDYLFTSESVSEGHPDK. His-17 contacts ATP. Asp-19 contacts Mg(2+). Glu-45 provides a ligand contact to K(+). 2 residues coordinate L-methionine: Glu-58 and Gln-102. Positions 102-112 are flexible loop; the sequence is QSADIAQGVDA. ATP contacts are provided by residues 169-171, 235-236, Asp-244, 250-251, Ala-267, and Lys-271; these read DAK, KF, and RK. Residue Asp-244 participates in L-methionine binding. Position 275 (Lys-275) interacts with L-methionine.

This sequence belongs to the AdoMet synthase family. As to quaternary structure, homotetramer; dimer of dimers. Mg(2+) serves as cofactor. Requires K(+) as cofactor.

The protein resides in the cytoplasm. The enzyme catalyses L-methionine + ATP + H2O = S-adenosyl-L-methionine + phosphate + diphosphate. Its pathway is amino-acid biosynthesis; S-adenosyl-L-methionine biosynthesis; S-adenosyl-L-methionine from L-methionine: step 1/1. Its function is as follows. Catalyzes the formation of S-adenosylmethionine (AdoMet) from methionine and ATP. The overall synthetic reaction is composed of two sequential steps, AdoMet formation and the subsequent tripolyphosphate hydrolysis which occurs prior to release of AdoMet from the enzyme. In Methylorubrum extorquens (strain CM4 / NCIMB 13688) (Methylobacterium extorquens), this protein is S-adenosylmethionine synthase.